A 227-amino-acid chain; its full sequence is Cytochrome c oxidase subunit 2 (227 aa).

Over 1–14 (MAYPFQLGLQDATS) the chain is Mitochondrial intermembrane. Residues 15-45 (PIMEELTNFHDHTLMIVFLISSLVLYIISLM) traverse the membrane as a helical segment. The Mitochondrial matrix segment spans residues 46 to 59 (LTTKLTHTSTMDAQ). Residues 60–87 (EVETIWTILPAVILILIALPSLRILYMM) traverse the membrane as a helical segment. The Mitochondrial intermembrane portion of the chain corresponds to 88–227 (DEINNPALTV…YFENWSASMI (140 aa)). 6 residues coordinate Cu cation: histidine 161, cysteine 196, glutamate 198, cysteine 200, histidine 204, and methionine 207. Glutamate 198 is a Mg(2+) binding site. Tyrosine 218 is subject to Phosphotyrosine.

The protein belongs to the cytochrome c oxidase subunit 2 family. In terms of assembly, component of the cytochrome c oxidase (complex IV, CIV), a multisubunit enzyme composed of 14 subunits. The complex is composed of a catalytic core of 3 subunits MT-CO1, MT-CO2 and MT-CO3, encoded in the mitochondrial DNA, and 11 supernumerary subunits COX4I, COX5A, COX5B, COX6A, COX6B, COX6C, COX7A, COX7B, COX7C, COX8 and NDUFA4, which are encoded in the nuclear genome. The complex exists as a monomer or a dimer and forms supercomplexes (SCs) in the inner mitochondrial membrane with NADH-ubiquinone oxidoreductase (complex I, CI) and ubiquinol-cytochrome c oxidoreductase (cytochrome b-c1 complex, complex III, CIII), resulting in different assemblies (supercomplex SCI(1)III(2)IV(1) and megacomplex MCI(2)III(2)IV(2)). Found in a complex with TMEM177, COA6, COX18, COX20, SCO1 and SCO2. Interacts with TMEM177 in a COX20-dependent manner. Interacts with COX20. Interacts with COX16. Cu cation serves as cofactor.

The protein localises to the mitochondrion inner membrane. It catalyses the reaction 4 Fe(II)-[cytochrome c] + O2 + 8 H(+)(in) = 4 Fe(III)-[cytochrome c] + 2 H2O + 4 H(+)(out). Functionally, component of the cytochrome c oxidase, the last enzyme in the mitochondrial electron transport chain which drives oxidative phosphorylation. The respiratory chain contains 3 multisubunit complexes succinate dehydrogenase (complex II, CII), ubiquinol-cytochrome c oxidoreductase (cytochrome b-c1 complex, complex III, CIII) and cytochrome c oxidase (complex IV, CIV), that cooperate to transfer electrons derived from NADH and succinate to molecular oxygen, creating an electrochemical gradient over the inner membrane that drives transmembrane transport and the ATP synthase. Cytochrome c oxidase is the component of the respiratory chain that catalyzes the reduction of oxygen to water. Electrons originating from reduced cytochrome c in the intermembrane space (IMS) are transferred via the dinuclear copper A center (CU(A)) of subunit 2 and heme A of subunit 1 to the active site in subunit 1, a binuclear center (BNC) formed by heme A3 and copper B (CU(B)). The BNC reduces molecular oxygen to 2 water molecules using 4 electrons from cytochrome c in the IMS and 4 protons from the mitochondrial matrix. This is Cytochrome c oxidase subunit 2 (MT-CO2) from Oenomys hypoxanthus (Rufous-nosed rat).